A 484-amino-acid chain; its full sequence is AMP nucleosidase (484 aa).

This sequence belongs to the AMP nucleosidase family.

The enzyme catalyses AMP + H2O = adenine + D-ribose 5-phosphate. Catalyzes the hydrolysis of the N-glycosidic bond of AMP to form adenine and ribose 5-phosphate. Involved in regulation of AMP concentrations. This chain is AMP nucleosidase, found in Escherichia coli O157:H7.